Here is a 256-residue protein sequence, read N- to C-terminus: DNA repair protein RecO (256 aa).

This sequence belongs to the RecO family.

Its function is as follows. Involved in DNA repair and RecF pathway recombination. The polypeptide is DNA repair protein RecO (Shouchella clausii (strain KSM-K16) (Alkalihalobacillus clausii)).